Consider the following 301-residue polypeptide: Rhodopsin (301 aa).

Topologically, residues 1 to 18 are extracellular; the sequence is LHMIHLHWYQYPPMNPMM. Residues 19–43 traverse the membrane as a helical segment; that stretch reads YPLLLIFMFITGIPCLAGNFVTIWV. Over 44 to 55 the chain is Cytoplasmic; it reads FMTTKSLRSPAN. Residues 56 to 78 traverse the membrane as a helical segment; that stretch reads LLVVNLAMSDFLMMFTMFPPMMI. At 79–92 the chain is on the extracellular side; sequence TCYYHTWTLGPTFC. Cysteines 92 and 169 form a disulfide. Residues 93–115 form a helical membrane-spanning segment; it reads QVYAFLGNLFGCTSIWTMVFITF. The short motif at 116–118 is the 'Ionic lock' involved in activated form stabilization element; that stretch reads DRY. The Cytoplasmic segment spans residues 116–134; the sequence is DRYNVIVKGVAGEPLSNKK. The chain crosses the membrane as a helical span at residues 135-155; sequence AALWILSAWVLSFSWCSAPFF. Over 156 to 182 the chain is Extracellular; the sequence is GWNRYVPEGNLTGCGTDYLSEDALSRS. A glycan (N-linked (GlcNAc...) asparagine) is linked at Asn-165. Residues 183–204 form a helical membrane-spanning segment; the sequence is YLYVYSVWVYFLPLLITIYCYV. Residues 205–245 lie on the Cytoplasmic side of the membrane; it reads FIIKAVAAHEKGMRDQAKKMGIKSLRNEEAQKTSAECRLAK. A helical membrane pass occupies residues 246 to 267; the sequence is IAMTTVALWFIAWTPYLLINWV. At 268-278 the chain is on the extracellular side; that stretch reads GMFARSYLSPV. Residues 279–300 traverse the membrane as a helical segment; that stretch reads YTIWGYVFAKANAVYNPIVYAI. Lys-288 is subject to N6-(retinylidene)lysine.

Belongs to the G-protein coupled receptor 1 family. Opsin subfamily. As to quaternary structure, homodimer. Interacts with GNAQ. In terms of processing, contains one covalently linked retinal chromophore.

It localises to the cell projection. The protein resides in the rhabdomere membrane. Its function is as follows. Photoreceptor required for image-forming vision at low light intensity. Can use both retinal and 3-dehydroretinal as visual pigment. Light-induced isomerization of 11-cis to all-trans retinal triggers a conformational change that activates signaling via G-proteins. Signaling via GNAQ probably mediates the activation of phospholipase C. In Cambarellus shufeldtii (Cajun dwarf crayfish), this protein is Rhodopsin (RHO).